A 148-amino-acid polypeptide reads, in one-letter code: D-aminoacyl-tRNA deacylase (148 aa).

A Gly-cisPro motif, important for rejection of L-amino acids motif is present at residues 137–138 (GP).

It belongs to the DTD family. As to quaternary structure, homodimer.

It is found in the cytoplasm. It catalyses the reaction glycyl-tRNA(Ala) + H2O = tRNA(Ala) + glycine + H(+). It carries out the reaction a D-aminoacyl-tRNA + H2O = a tRNA + a D-alpha-amino acid + H(+). An aminoacyl-tRNA editing enzyme that deacylates mischarged D-aminoacyl-tRNAs. Also deacylates mischarged glycyl-tRNA(Ala), protecting cells against glycine mischarging by AlaRS. Acts via tRNA-based rather than protein-based catalysis; rejects L-amino acids rather than detecting D-amino acids in the active site. By recycling D-aminoacyl-tRNA to D-amino acids and free tRNA molecules, this enzyme counteracts the toxicity associated with the formation of D-aminoacyl-tRNA entities in vivo and helps enforce protein L-homochirality. The protein is D-aminoacyl-tRNA deacylase of Lacticaseibacillus casei (strain BL23) (Lactobacillus casei).